The primary structure comprises 163 residues: NADH-quinone oxidoreductase subunit I (163 aa).

4Fe-4S ferredoxin-type domains lie at 54 to 84 (LRRY…IDSA) and 94 to 123 (TRYD…ETHI). Residues C64, C67, C70, C74, C103, C106, C109, and C113 each contribute to the [4Fe-4S] cluster site.

This sequence belongs to the complex I 23 kDa subunit family. In terms of assembly, NDH-1 is composed of 14 different subunits. Subunits NuoA, H, J, K, L, M, N constitute the membrane sector of the complex. Requires [4Fe-4S] cluster as cofactor.

It localises to the cell inner membrane. It catalyses the reaction a quinone + NADH + 5 H(+)(in) = a quinol + NAD(+) + 4 H(+)(out). Its function is as follows. NDH-1 shuttles electrons from NADH, via FMN and iron-sulfur (Fe-S) centers, to quinones in the respiratory chain. The immediate electron acceptor for the enzyme in this species is believed to be ubiquinone. Couples the redox reaction to proton translocation (for every two electrons transferred, four hydrogen ions are translocated across the cytoplasmic membrane), and thus conserves the redox energy in a proton gradient. The protein is NADH-quinone oxidoreductase subunit I of Xylella fastidiosa (strain 9a5c).